A 239-amino-acid polypeptide reads, in one-letter code: Fatty acid metabolism regulator protein (239 aa).

An HTH gntR-type domain is found at Lys-6 to Phe-74. The H-T-H motif DNA-binding region spans Glu-34–Gln-53.

Homodimer.

Its subcellular location is the cytoplasm. Its function is as follows. Multifunctional regulator of fatty acid metabolism. The polypeptide is Fatty acid metabolism regulator protein (Shewanella denitrificans (strain OS217 / ATCC BAA-1090 / DSM 15013)).